Reading from the N-terminus, the 498-residue chain is AP2-like ethylene-responsive transcription factor AIL7 (498 aa).

The segment covering 186–195 (TSDQPLSCNN) has biased composition (polar residues). Positions 186–220 (TSDQPLSCNNGERGGNSNKKKTVSKKETSDDSKKK) are disordered. A compositionally biased stretch (basic and acidic residues) spans 209 to 220 (SKKETSDDSKKK). DNA-binding regions (AP2/ERF) lie at residues 231 to 297 (IYRG…TNFP) and 333 to 391 (IYRG…TNFE). Positions 422–451 (ESPSSSSSDHNLQQQQLLPSSSPSDQNPNS) are enriched in low complexity. The disordered stretch occupies residues 422-452 (ESPSSSSSDHNLQQQQLLPSSSPSDQNPNSI).

The protein belongs to the AP2/ERF transcription factor family. AP2 subfamily. Interacts with HDG2, and possibly with HDG3, HDG7, ANL2, ATML1 and PDF2. As to expression, expressed in roots, seedlings, inflorescence, and siliques. Also detected at low levels in leaves.

The protein localises to the nucleus. Functionally, probably acts as a transcriptional activator. Binds to the GCC-box pathogenesis-related promoter element. May be involved in the regulation of gene expression by stress factors and by components of stress signal transduction pathways. In Arabidopsis thaliana (Mouse-ear cress), this protein is AP2-like ethylene-responsive transcription factor AIL7.